The chain runs to 308 residues: Methionyl-tRNA formyltransferase (308 aa).

109 to 112 (SLLP) provides a ligand contact to (6S)-5,6,7,8-tetrahydrofolate.

This sequence belongs to the Fmt family.

It catalyses the reaction L-methionyl-tRNA(fMet) + (6R)-10-formyltetrahydrofolate = N-formyl-L-methionyl-tRNA(fMet) + (6S)-5,6,7,8-tetrahydrofolate + H(+). Attaches a formyl group to the free amino group of methionyl-tRNA(fMet). The formyl group appears to play a dual role in the initiator identity of N-formylmethionyl-tRNA by promoting its recognition by IF2 and preventing the misappropriation of this tRNA by the elongation apparatus. In Caulobacter vibrioides (strain NA1000 / CB15N) (Caulobacter crescentus), this protein is Methionyl-tRNA formyltransferase.